The chain runs to 348 residues: Mitochondrial glycine transporter (348 aa).

Solcar repeat units lie at residues 10-94 (TKST…IREN), 130-214 (LSNT…SKQH), and 249-333 (RAAS…LIRR). 6 helical membrane-spanning segments follow: residues 16 to 41 (FVAGLGSGVLSAILLQPIDLLKTRVQ), 69 to 95 (GTLPSALRTGFGSAIYFTTLNTIRENA), 136 to 161 (LLAGAVARSFAGFILMPLTVLKVRYE), 189 to 212 (GFGATAIRDAPYAGLYVLFYEKSK), 253 to 279 (INFASGVFSAIICSIISNPFDAVKTRI), and 308 to 326 (GLALRMSRKAMSSALAWTV).

This sequence belongs to the mitochondrial carrier (TC 2.A.29) family. SLC25A38 subfamily.

It localises to the mitochondrion inner membrane. The catalysed reaction is glycine(in) = glycine(out). Its function is as follows. Mitochondrial glycine transporter that imports glycine into the mitochondrial matrix. Plays an important role in providing glycine for the first enzymatic step in heme biosynthesis, the condensation of glycine with succinyl-CoA to produce 5-aminolevulinate (ALA) in the mitochondrial matrix. The chain is Mitochondrial glycine transporter (mic-13) from Neurospora crassa (strain ATCC 24698 / 74-OR23-1A / CBS 708.71 / DSM 1257 / FGSC 987).